The chain runs to 425 residues: Polyadenylate-binding protein RBP47B' (425 aa).

3 consecutive RRM domains span residues arginine 24–alanine 102, histidine 116–proline 195, and threonine 237–asparagine 309.

This sequence belongs to the polyadenylate-binding RBP47 family. As to quaternary structure, interacts with the poly(A) tail of mRNA in nucleus.

The protein localises to the nucleus. It is found in the cytoplasmic granule. Functionally, heterogeneous nuclear ribonucleoprotein (hnRNP)-protein binding the poly(A) tail of mRNA and probably involved in some steps of pre-mRNA maturation. This Arabidopsis thaliana (Mouse-ear cress) protein is Polyadenylate-binding protein RBP47B' (RBP47B').